The primary structure comprises 656 residues: Nexilin (656 aa).

Disordered stretches follow at residues 1–131 (MNDV…IEQD), 165–198 (RAAANRKDPEDLDREHRNGRVSQEEEKTRHEEEC), and 215–284 (TEAK…VFKE). Over residues 11 to 26 (LLSSSKPVPKSYVPKL) the composition is skewed to low complexity. Over residues 27 to 78 (GKGDVKDKFEAMQRAREERNQRRSRDEKQRRKEQYIREREWNRRKQEIKDML) the composition is skewed to basic and acidic residues. Serine 80 carries the post-translational modification Phosphoserine. 3 stretches are compositionally biased toward basic and acidic residues: residues 103-131 (GKFDEMEKHRQEEQRKRTEEERKRRIEQD), 169-198 (NRKDPEDLDREHRNGRVSQEEEKTRHEEEC), and 216-269 (EAKK…RNMV). Residues serine 221, serine 330, serine 337, and serine 345 each carry the phosphoserine modification. Residue threonine 350 is modified to Phosphothreonine. Disordered stretches follow at residues 468 to 492 (NFHEDDDVDVKPAKKSESPFTHKVN) and 529 to 564 (AALQKKREDDEEEEGSIVNGSTTEDEEQTRSGAPWF). Phosphoserine is present on residues serine 544 and serine 549. A Phosphothreonine modification is found at threonine 551. The 89-residue stretch at 562–650 (PWFKKPLRNT…GSAASTCILT (89 aa)) folds into the Ig-like domain.

In terms of assembly, interacts with F-actin. In terms of tissue distribution, expressed in brain, testis, spleen and fibroblasts (at protein level). Not detected in liver, kidney or epithelial cells (at protein level).

It localises to the cytoplasm. The protein localises to the cytoskeleton. It is found in the cell junction. Its subcellular location is the adherens junction. The protein resides in the myofibril. It localises to the sarcomere. The protein localises to the z line. In terms of biological role, involved in regulating cell migration through association with the actin cytoskeleton. Has an essential role in the maintenance of Z line and sarcomere integrity. This Rattus norvegicus (Rat) protein is Nexilin.